A 236-amino-acid chain; its full sequence is Reticulon-3 (236 aa).

Residues 1 to 24 are compositionally biased toward low complexity; the sequence is MAEPSAATQSPSISSSSSGAEPSA. The interval 1–31 is disordered; that stretch reads MAEPSAATQSPSISSSSSGAEPSAPGGGGSP. The residue at position 2 (Ala-2) is an N-acetylalanine. The Cytoplasmic segment spans residues 2–67; the sequence is AEPSAATQSP…KKTGFVFGTT (66 aa). The residue at position 30 (Ser-30) is a Phosphoserine. A Reticulon domain is found at 48–236; the sequence is VHDLIFWRDV…LPGIAKKKAE (189 aa). Residues 68–91 constitute an intramembrane region (helical); it reads LIMLLSLAAFSVISVVSYLILALL. Residues 92-151 lie on the Cytoplasmic side of the membrane; the sequence is SVTISFRIYKSVIQAVQKSEEGHPFKAYLDVDITLSSEAFHNYMNAAMVHINRALKLIIR. The helical intramembrane region spans 152–172; it reads LFLVEDLVDSLKLAVFMWLMT. Over 173–176 the chain is Cytoplasmic; it reads YVGA. Residues 177–197 constitute an intramembrane region (helical); the sequence is VFNGITLLILAELLIFSVPIV. The tract at residues 191-236 is interaction with FADD; sequence IFSVPIVYEKYKTQIDHYVGIARDQTKSIVEKIQAKLPGIAKKKAE. Residues 198-236 lie on the Cytoplasmic side of the membrane; sequence YEKYKTQIDHYVGIARDQTKSIVEKIQAKLPGIAKKKAE. Positions 204-206 are interaction with BACE1; that stretch reads QID.

As to quaternary structure, homodimer. Interacts with RTN4. Interacts with BACE1, BACE2, BCL2 and FADD. Interacts with ATL1 and ATL2. Interacts with TMEM33. Interacts with ZFYVE27 and with KIF5A in a ZFYVE27-dependent manner. Interacts with RIGI. Interacts with TRIM25.

It localises to the endoplasmic reticulum membrane. The protein resides in the golgi apparatus membrane. Its function is as follows. May be involved in membrane trafficking in the early secretory pathway. Inhibits BACE1 activity and amyloid precursor protein processing. May induce caspase-8 cascade and apoptosis. May favor BCL2 translocation to the mitochondria upon endoplasmic reticulum stress. Induces the formation of endoplasmic reticulum tubules. Acts also as an inflammation-resolving regulator by interacting with both TRIM25 and RIGI, subsequently impairing RIGI 'Lys-63'-linked polyubiquitination leading to IRF3 and NF-kappa-B inhibition. This Pongo abelii (Sumatran orangutan) protein is Reticulon-3 (RTN3).